Reading from the N-terminus, the 141-residue chain is Nucleoside diphosphate kinase (141 aa).

ATP contacts are provided by lysine 11, phenylalanine 59, arginine 87, threonine 93, arginine 104, and asparagine 114. Histidine 117 serves as the catalytic Pros-phosphohistidine intermediate.

The protein belongs to the NDK family. As to quaternary structure, homotetramer. Requires Mg(2+) as cofactor.

It localises to the cytoplasm. The enzyme catalyses a 2'-deoxyribonucleoside 5'-diphosphate + ATP = a 2'-deoxyribonucleoside 5'-triphosphate + ADP. It catalyses the reaction a ribonucleoside 5'-diphosphate + ATP = a ribonucleoside 5'-triphosphate + ADP. In terms of biological role, major role in the synthesis of nucleoside triphosphates other than ATP. The ATP gamma phosphate is transferred to the NDP beta phosphate via a ping-pong mechanism, using a phosphorylated active-site intermediate. The protein is Nucleoside diphosphate kinase of Nitrosomonas eutropha (strain DSM 101675 / C91 / Nm57).